Consider the following 333-residue polypeptide: Forkhead box protein unc-130 (333 aa).

The disordered stretch occupies residues Met-1–Ala-126. A compositionally biased stretch (basic and acidic residues) spans Pro-14 to Pro-24. A compositionally biased stretch (polar residues) spans Arg-37–Ser-50. Positions Leu-52–Arg-62 are enriched in basic and acidic residues. Residues Ser-98–Asp-110 are compositionally biased toward acidic residues. A DNA-binding region (fork-head) is located at residues Lys-127 to Lys-221. Residues Ala-304–Ala-333 form a disordered region. Over residues Ser-307–Ala-333 the composition is skewed to low complexity.

Expressed in ventral body wall muscle. Expressed in the structural cells and two neurons of each ray in the male tail.

The protein localises to the nucleus. In terms of biological role, probable transcription factor. Binds to DNA sequence motif 5'-CTGTTTCA-3'. Required for the migration of distal tip cells (DTC) and axonal growth-cones along the dorsal-ventral axis of the body wall, acting by cell autonomous repression of unc-129/TGF-beta expression in ventral body muscle during embyogenesis. Binds to the promoter region of the unc-129 gene. Plays a role in dorsal-ventral patterning and fate specification of the postembryonic mesoderm. Involved in male tail morphogenesis and in embryogenesis. Plays a role in the development of sensory neurons and is required to repress AWA fate and promote ASG fate in the ASG chemosensory neurons. Regulates expression of a class of small RNAs, known as 21U-RNAs. In Caenorhabditis elegans, this protein is Forkhead box protein unc-130.